Here is a 567-residue protein sequence, read N- to C-terminus: Phosphoglucomutase-like protein 5 (567 aa).

A disordered region spans residues 1–26 (MEGSPIPVLTVPTAPYEDQRPAGGGG). Position 120 is a phosphothreonine (T120). Position 122 is a phosphoserine (S122).

The protein belongs to the phosphohexose mutase family. In terms of assembly, interacts with DMD/dystrophin; the interaction is direct. Interacts with UTRN/utrophin. In terms of tissue distribution, detected in smooth and cardiac muscle at high levels and in skeletal muscle at low level. Present in other tissues due to vascular or other smooth muscle component. Low levels are present in liver, kidney, skin and brain (at protein level).

It localises to the cell junction. The protein resides in the adherens junction. Its subcellular location is the cytoplasm. It is found in the cytoskeleton. The protein localises to the cell membrane. It localises to the sarcolemma. Component of adherens-type cell-cell and cell-matrix junctions. Has no phosphoglucomutase activity in vitro. The chain is Phosphoglucomutase-like protein 5 from Homo sapiens (Human).